Reading from the N-terminus, the 202-residue chain is MAETAASRTGSVSRKTNETSISVSVNLDGTGKSKISTGVGFFDHMLDQLARHSLIDMEIDAKGDLHIDDHHTVEDTGIAIGQAISKALGDRRGITRYASIDLAMDETMTKAAVDLSGRPFLVWNVAFSAPKIGTFDTELVREFFQALAQNAGITLHILNHYGANNHHIAETCFKAVARALRTATEIDPRQAGRVPSTKGTLV.

It belongs to the imidazoleglycerol-phosphate dehydratase family.

It localises to the cytoplasm. It carries out the reaction D-erythro-1-(imidazol-4-yl)glycerol 3-phosphate = 3-(imidazol-4-yl)-2-oxopropyl phosphate + H2O. It functions in the pathway amino-acid biosynthesis; L-histidine biosynthesis; L-histidine from 5-phospho-alpha-D-ribose 1-diphosphate: step 6/9. The polypeptide is Imidazoleglycerol-phosphate dehydratase (Rhizobium etli (strain CIAT 652)).